Consider the following 245-residue polypeptide: Adenosylcobinamide-GDP ribazoletransferase (245 aa).

5 helical membrane-spanning segments follow: residues Trp-35–Leu-55, Ile-108–His-128, Gly-137–Val-157, Ile-176–Ile-196, and Thr-197–Arg-217.

Belongs to the CobS family. Requires Mg(2+) as cofactor.

Its subcellular location is the cell inner membrane. It catalyses the reaction alpha-ribazole + adenosylcob(III)inamide-GDP = adenosylcob(III)alamin + GMP + H(+). The enzyme catalyses alpha-ribazole 5'-phosphate + adenosylcob(III)inamide-GDP = adenosylcob(III)alamin 5'-phosphate + GMP + H(+). It functions in the pathway cofactor biosynthesis; adenosylcobalamin biosynthesis; adenosylcobalamin from cob(II)yrinate a,c-diamide: step 7/7. Joins adenosylcobinamide-GDP and alpha-ribazole to generate adenosylcobalamin (Ado-cobalamin). Also synthesizes adenosylcobalamin 5'-phosphate from adenosylcobinamide-GDP and alpha-ribazole 5'-phosphate. The sequence is that of Adenosylcobinamide-GDP ribazoletransferase from Nitratidesulfovibrio vulgaris (strain ATCC 29579 / DSM 644 / CCUG 34227 / NCIMB 8303 / VKM B-1760 / Hildenborough) (Desulfovibrio vulgaris).